Reading from the N-terminus, the 101-residue chain is NAD(P)H-quinone oxidoreductase subunit 4L, chloroplastic (101 aa).

The next 3 membrane-spanning stretches (helical) occupy residues 2 to 22, 32 to 52, and 61 to 81; these read YIEN…YGLL, MCLE…SNFI, and VIAI…LALV.

This sequence belongs to the complex I subunit 4L family. As to quaternary structure, NDH is composed of at least 16 different subunits, 5 of which are encoded in the nucleus.

The protein resides in the plastid. It localises to the chloroplast thylakoid membrane. The catalysed reaction is a plastoquinone + NADH + (n+1) H(+)(in) = a plastoquinol + NAD(+) + n H(+)(out). The enzyme catalyses a plastoquinone + NADPH + (n+1) H(+)(in) = a plastoquinol + NADP(+) + n H(+)(out). Its function is as follows. NDH shuttles electrons from NAD(P)H:plastoquinone, via FMN and iron-sulfur (Fe-S) centers, to quinones in the photosynthetic chain and possibly in a chloroplast respiratory chain. The immediate electron acceptor for the enzyme in this species is believed to be plastoquinone. Couples the redox reaction to proton translocation, and thus conserves the redox energy in a proton gradient. This chain is NAD(P)H-quinone oxidoreductase subunit 4L, chloroplastic, found in Mesostigma viride (Green alga).